Consider the following 47-residue polypeptide: Lysis protein for colicin E5 (47 aa).

The N-terminal stretch at 1 to 19 (MKKITWIILLLLAAIILAA) is a signal peptide. Cys-20 carries the N-palmitoyl cysteine lipid modification. Cys-20 is lipidated: S-diacylglycerol cysteine.

It localises to the cell outer membrane. Its function is as follows. Lysis proteins are required for both colicin release and partial cell lysis. In Escherichia coli, this protein is Lysis protein for colicin E5 (lys).